The primary structure comprises 130 residues: Large ribosomal subunit protein bL12 (130 aa).

It belongs to the bacterial ribosomal protein bL12 family. As to quaternary structure, homodimer. Part of the ribosomal stalk of the 50S ribosomal subunit. Forms a multimeric L10(L12)X complex, where L10 forms an elongated spine to which 2 to 4 L12 dimers bind in a sequential fashion. Binds GTP-bound translation factors.

Its function is as follows. Forms part of the ribosomal stalk which helps the ribosome interact with GTP-bound translation factors. Is thus essential for accurate translation. In Parafrankia sp. (strain EAN1pec), this protein is Large ribosomal subunit protein bL12.